A 424-amino-acid chain; its full sequence is COUP transcription factor 1 (424 aa).

The tract at residues 1–82 is disordered; that stretch reads MAMVVSSWRD…QGPPGSGQSQ (82 aa). Residues 39-68 are compositionally biased toward low complexity; it reads EQQQQQAGSGAPHTPQTPGQPGAPATPGTA. The segment at residues 84-159 is a DNA-binding region (nuclear receptor); that stretch reads HIECVVCGDK…VGMRREAVQR (76 aa). 2 NR C4-type zinc fingers span residues 87-107 and 123-147; these read CVVC…CEGC and CRAN…LKKC. The NR LBD domain maps to 185–411; that stretch reads YLSGYISLLL…TLIRDMLLSG (227 aa).

The protein belongs to the nuclear hormone receptor family. NR2 subfamily. In terms of assembly, binds DNA as dimer; homodimer and probable heterodimer with NR2F6. Interacts with GTF2B; this interaction is direct. Interacts with COPS2.

The protein localises to the nucleus. Coup (chicken ovalbumin upstream promoter) transcription factor binds to the ovalbumin promoter and, in conjunction with another protein (S300-II) stimulates initiation of transcription. Binds to both direct repeats and palindromes of the 5'-AGGTCA-3' motif. Represses transcriptional activity of LHCG. In Bos taurus (Bovine), this protein is COUP transcription factor 1 (NR2F1).